Consider the following 1225-residue polypeptide: NHS-like protein 2 (1225 aa).

9 disordered regions span residues 161–180 (TFRS…PQSA), 193–213 (QLSE…SLSL), 291–371 (NFSQ…ESMG), 466–510 (HMPE…TTDV), 543–632 (LSAQ…PEST), 670–766 (QGSS…KFPK), 812–1009 (KTNP…KKPS), 1042–1093 (DTKC…DKTA), and 1128–1203 (KEPG…KTTN). Composition is skewed to polar residues over residues 291 to 315 (NFSQ…TSDI) and 339 to 350 (SLTSPVLRTPSS). Ser-500 is subject to Phosphoserine. Over residues 552-568 (RRQRSKSISLRKAKKKP) the composition is skewed to basic residues. Ser-576 is modified (phosphoserine). The span at 675–688 (SLASPSTSRATTPS) shows a compositional bias: low complexity. Position 691 is a phosphoserine (Ser-691). Composition is skewed to polar residues over residues 710–730 (SPSS…SMSL) and 812–827 (KTNP…TQSD). Residues 841-851 (PEDDIESPEYA) show a composition bias toward acidic residues. Over residues 852–867 (EEPRAEEVFTLPERKT) the composition is skewed to basic and acidic residues. Composition is skewed to polar residues over residues 939–968 (GEST…QPPQ) and 1054–1065 (SLGQRVTSTPQA). Ser-1054 is subject to Phosphoserine. The segment covering 1082-1093 (TEEKSLISDKTA) has biased composition (basic and acidic residues). Positions 1138–1155 (RTSSHSPIKNTAESPISE) are enriched in polar residues. Positions 1156-1166 (STATAGSGSSA) are enriched in low complexity.

It belongs to the NHS family.

The sequence is that of NHS-like protein 2 from Homo sapiens (Human).